A 418-amino-acid chain; its full sequence is Glutamyl-tRNA reductase (418 aa).

Substrate is bound by residues 49 to 52 (TCNR), Ser-107, 112 to 114 (EPQ), and Gln-118. The active-site Nucleophile is Cys-50. 187–192 (GAGETI) serves as a coordination point for NADP(+).

Belongs to the glutamyl-tRNA reductase family. As to quaternary structure, homodimer.

The catalysed reaction is (S)-4-amino-5-oxopentanoate + tRNA(Glu) + NADP(+) = L-glutamyl-tRNA(Glu) + NADPH + H(+). Its pathway is porphyrin-containing compound metabolism; protoporphyrin-IX biosynthesis; 5-aminolevulinate from L-glutamyl-tRNA(Glu): step 1/2. Catalyzes the NADPH-dependent reduction of glutamyl-tRNA(Glu) to glutamate 1-semialdehyde (GSA). The sequence is that of Glutamyl-tRNA reductase from Vibrio parahaemolyticus serotype O3:K6 (strain RIMD 2210633).